A 187-amino-acid chain; its full sequence is Threonylcarbamoyl-AMP synthase (187 aa).

In terms of domain architecture, YrdC-like spans 3–187 (EVLPADVAEL…AKSGQVIRKG (185 aa)).

The protein belongs to the SUA5 family. TsaC subfamily.

The protein resides in the cytoplasm. The enzyme catalyses L-threonine + hydrogencarbonate + ATP = L-threonylcarbamoyladenylate + diphosphate + H2O. Required for the formation of a threonylcarbamoyl group on adenosine at position 37 (t(6)A37) in tRNAs that read codons beginning with adenine. Catalyzes the conversion of L-threonine, HCO(3)(-)/CO(2) and ATP to give threonylcarbamoyl-AMP (TC-AMP) as the acyladenylate intermediate, with the release of diphosphate. The polypeptide is Threonylcarbamoyl-AMP synthase (Shewanella halifaxensis (strain HAW-EB4)).